The chain runs to 1860 residues: Probable helicase with zinc finger domain (1860 aa).

The segment at 168-196 (SEEYTLCKRFLEQGLCRYGAQCTSAHSQE) adopts a C3H1-type zinc-finger fold. 661–668 (GPYGTGKT) contacts ATP. Residues 787-790 (DEAA) carry the DEAA box motif. 6 disordered regions span residues 1106–1136 (RSQH…TEPF), 1158–1177 (TPPG…VQRL), 1286–1317 (ERKA…GFPA), 1556–1604 (IQPR…PPDH), 1641–1709 (RQDP…RYPS), and 1749–1860 (MSEE…TYFK). Low complexity predominate over residues 1107–1116 (SQHPPQQGPG). Basic and acidic residues predominate over residues 1286 to 1298 (ERKAPELKEKQGD). Over residues 1301 to 1313 (SVQNKSPEPQSNM) the composition is skewed to polar residues. Low complexity predominate over residues 1641–1660 (RQDPGPLQHQQQKQQLQAPQ). Composition is skewed to pro residues over residues 1760 to 1769 (QPPPPPPPHP) and 1783 to 1794 (PLLPSKQTPPDP). Residues 1847–1860 (GSSNSSNGYYTYFK) show a composition bias toward low complexity.

It belongs to the DNA2/NAM7 helicase family.

It is found in the nucleus. In terms of biological role, may act as a helicase. In Danio rerio (Zebrafish), this protein is Probable helicase with zinc finger domain (helz).